Reading from the N-terminus, the 330-residue chain is GMP reductase (330 aa).

Catalysis depends on Cys-180, which acts as the Thioimidate intermediate. Residue 209-232 (LIADGGIRHNGDIAKSVRFGASMV) participates in NADP(+) binding.

The protein belongs to the IMPDH/GMPR family. GuaC type 2 subfamily.

It catalyses the reaction IMP + NH4(+) + NADP(+) = GMP + NADPH + 2 H(+). Its function is as follows. Catalyzes the irreversible NADPH-dependent deamination of GMP to IMP. It functions in the conversion of nucleobase, nucleoside and nucleotide derivatives of G to A nucleotides, and in maintaining the intracellular balance of A and G nucleotides. This chain is GMP reductase, found in Lactobacillus gasseri (strain ATCC 33323 / DSM 20243 / BCRC 14619 / CIP 102991 / JCM 1131 / KCTC 3163 / NCIMB 11718 / NCTC 13722 / AM63).